A 521-amino-acid chain; its full sequence is UPF0053 protein BU323 (521 aa).

The next 7 membrane-spanning stretches (helical) occupy residues 13–33 (LLTLVILEVVLGIDNLIFVAI), 49–69 (IGLGLALVMRLALLSLISWIV), 80–100 (FFSLSIRDIILLFGGFFLLFK), 125–145 (FWAVVIQIVVLDAVFSLDAII), 150–170 (MVNQLLIMMIAVILATFLMLL), 185–205 (VVVLCLSFLLMIGFSLVTEAL), and 207–227 (FCIPKGYLYAAIGFSILIEIF). CBS domains lie at 311–370 (MTPR…KIDA) and 374–434 (SSKI…DADE).

The protein belongs to the UPF0053 family.

Its subcellular location is the cell membrane. This is UPF0053 protein BU323 from Buchnera aphidicola subsp. Acyrthosiphon pisum (strain APS) (Acyrthosiphon pisum symbiotic bacterium).